The chain runs to 222 residues: Type II restriction enzyme AbrI (222 aa).

2 disordered regions span residues 21 to 45 (GNREKARQKQQESGKPDQGERRRDR) and 161 to 222 (NQRR…SPRI). Basic and acidic residues predominate over residues 22 to 42 (NREKARQKQQESGKPDQGERR). Positions 188–202 (SSASGSSRSSFTPRP) are enriched in low complexity.

Belongs to the XhoI type II restriction endonuclease family.

It catalyses the reaction Endonucleolytic cleavage of DNA to give specific double-stranded fragments with terminal 5'-phosphates.. A P subtype restriction enzyme that recognizes the double-stranded sequence 5'-CTCGAG-3' and cleaves after C-1. This chain is Type II restriction enzyme AbrI (abrIR), found in Azospirillum brasilense.